The primary structure comprises 225 residues: Ferric nitrobindin-like protein (225 aa).

Positions 78–84 (GVWRGTG) match the GXWXGXG motif.

This sequence belongs to the nitrobindin family.

The polypeptide is Ferric nitrobindin-like protein (Corynebacterium diphtheriae (strain ATCC 700971 / NCTC 13129 / Biotype gravis)).